Here is a 1075-residue protein sequence, read N- to C-terminus: Disheveled-associated activator of morphogenesis 2 (1075 aa).

Positions 40 to 416 constitute a GBD/FH3 domain; it reads VPIPPTEELN…QIVLQDERGD (377 aa). The stretch at 437-517 forms a coiled coil; it reads NENEVKQWRD…VAQLNEYSQG (81 aa). Disordered regions lie at residues 517–611, 1006–1025, and 1048–1075; these read GGSI…IPQP, KEQREKERRQKKAKAGSISE, and SKLKRNRKRSGNQGLETSRERVVTKLNY. A compositionally biased stretch (pro residues) spans 523–532; the sequence is PAPPPPPPGG. Over residues 533–544 the composition is skewed to low complexity; it reads PLALSSALSSAL. Residues 550-581 show a composition bias toward pro residues; it reads PPLPPPLPFSSCPPPPAPPPPPGGPPPPPGAP. Positions 605 to 1075 constitute an FH2 domain; the sequence is KKSIPQPSHP…RERVVTKLNY (471 aa). Positions 1025–1075 constitute a DAD domain; that stretch reads EETGEFDDLVSALRSGEVFDKDLSKLKRNRKRSGNQGLETSRERVVTKLNY. Positions 1064–1075 are enriched in basic and acidic residues; that stretch reads TSRERVVTKLNY.

Belongs to the formin homology family. Expressed in progenitor populations of the embryonic spinal cord (at protein level).

Key regulator of the Wnt signaling pathway, which is required for various processes during development, such as dorsal patterning, determination of left/right symmetry or myelination in the central nervous system. Acts downstream of Wnt ligands and upstream of beta-catenin (CTNNB1). Required for canonical Wnt signaling pathway during patterning in the dorsal spinal cord by promoting the aggregation of Disheveled (Dvl) complexes, thereby clustering and formation of Wnt receptor signalosomes and potentiating Wnt activity. During dorsal patterning of the spinal cord, inhibits oligodendrocytes differentiation via interaction with PIP5K1A. Also regulates non-canonical Wnt signaling pathway. Acts downstream of PITX2 in the developing gut and is required for left/right asymmetry within dorsal mesentery: affects mesenchymal condensation by lengthening cadherin-based junctions through WNT5A and non-canonical Wnt signaling, inducing polarized condensation in the left dorsal mesentery necessary to initiate gut rotation. Together with DAAM1, required for myocardial maturation and sarcomere assembly. The sequence is that of Disheveled-associated activator of morphogenesis 2 from Gallus gallus (Chicken).